A 416-amino-acid polypeptide reads, in one-letter code: Nucleoside transporter 1 (416 aa).

Residues 1 to 26 are compositionally biased toward basic and acidic residues; sequence MSISKESSKTMIDIEKKGGEGKDGKG. The disordered stretch occupies residues 1 to 28; the sequence is MSISKESSKTMIDIEKKGGEGKDGKGGS. Residues 1-35 lie on the Cytoplasmic side of the membrane; the sequence is MSISKESSKTMIDIEKKGGEGKDGKGGSKMTKNEQ. Residues 36–58 form a helical membrane-spanning segment; the sequence is FLLPFTFILIGLSSLNVWNTALG. Topologically, residues 59–64 are extracellular; that stretch reads LNINFK. The chain crosses the membrane as a helical span at residues 65–83; the sequence is YNTFQITGLVCSSIIALFV. Residues 84–87 lie on the Cytoplasmic side of the membrane; the sequence is KVPK. A helical transmembrane segment spans residues 88 to 107; it reads MLLPFALGGLAMLCAGFQIA. Over 108–119 the chain is Extracellular; that stretch reads HQCFTFEQFDTY. A helical transmembrane segment spans residues 120–139; that stretch reads CLIAFIVIGIMAGLAQTIAF. Topologically, residues 140–148 are cytoplasmic; that stretch reads SVGTTMEEN. The chain crosses the membrane as a helical span at residues 149–171; that stretch reads MGGYMSAGIGISGVFIFIINLLL. Residues 172–187 are Extracellular-facing; sequence DQIVPDQKKFNVNEAK. The chain crosses the membrane as a helical span at residues 188–210; that stretch reads LLYLFLICELCLVLAIIFSVCNL. At 211–241 the chain is on the cytoplasmic side; sequence ELSSSKTSKEEEYSDKEQGLSYLELLKDSYK. The helical transmembrane segment at 242 to 261 threads the bilayer; it reads AILAMFLVNWLSLQLFPGVG. The Extracellular portion of the chain corresponds to 262–273; that stretch reads HKKWQESHNISD. Residues 274 to 292 traverse the membrane as a helical segment; that stretch reads YNVTLIVGMFQVFDFVSRY. Over 293–311 the chain is Cytoplasmic; it reads PPNLSHMKIFKWFTFSLNK. The helical transmembrane segment at 312 to 331 threads the bilayer; the sequence is LLLLNFLRLLFIPWFVINAA. Residues 332–343 lie on the Extracellular side of the membrane; the sequence is CDLPIFTNIVQQ. Residues 344 to 366 traverse the membrane as a helical segment; the sequence is CVCMAMLAFTNGWFNTVPFLVFV. Over 367–380 the chain is Cytoplasmic; it reads QELKKAKKKKDIET. Residues 381-403 form a helical membrane-spanning segment; the sequence is ISTFLVVAMFVGLFMGIWTTYIY. The Extracellular segment spans residues 404-416; the sequence is DFFPIVIKRYVVP.

This sequence belongs to the SLC29A/ENT transporter (TC 2.A.57) family.

The protein localises to the cell membrane. It catalyses the reaction inosine(in) = inosine(out). It carries out the reaction adenosine(in) = adenosine(out). The catalysed reaction is hypoxanthine(out) = hypoxanthine(in). The enzyme catalyses guanosine(in) = guanosine(out). It catalyses the reaction guanine(out) = guanine(in). It carries out the reaction thymidine(in) = thymidine(out). The catalysed reaction is uridine(out) = uridine(in). The enzyme catalyses uracil(in) = uracil(out). It catalyses the reaction thymine(out) = thymine(in). It carries out the reaction adenine(out) = adenine(in). The catalysed reaction is cytosine(out) = cytosine(in). The enzyme catalyses xanthine(out) = xanthine(in). Its function is as follows. Nucleoside and nucleobase transporter with a broad substrate specificity. This is Nucleoside transporter 1 from Plasmodium vivax (strain Salvador I).